Reading from the N-terminus, the 853-residue chain is Stachyose synthase (853 aa).

The propeptide occupies 1–11; that stretch reads MAPPLNSTTSN.

Belongs to the glycosyl hydrolases 36 family.

The protein resides in the cytoplasm. It catalyses the reaction alpha-D-galactosyl-(1-&gt;3)-1D-myo-inositol + raffinose = stachyose + myo-inositol. It participates in glycan metabolism; stachyose biosynthesis; stachyose from raffinose: step 1/1. Its function is as follows. Catalyzes stachyose synthesis by transfer of a galactosyl moiety from galactinol to raffinose. Also catalyzes verbascose synthesis by galactosyl transfer from galactinol to stachyose or from one stachyose molecule to another. Oligosaccharides of the raffinose family play a protective role in maturation drying of seeds. They may act as cryoprotectants in frost-hardy plants. This Pisum sativum (Garden pea) protein is Stachyose synthase (STS1).